The sequence spans 449 residues: Exodeoxyribonuclease 7 large subunit (449 aa).

This sequence belongs to the XseA family. As to quaternary structure, heterooligomer composed of large and small subunits.

The protein resides in the cytoplasm. It carries out the reaction Exonucleolytic cleavage in either 5'- to 3'- or 3'- to 5'-direction to yield nucleoside 5'-phosphates.. Bidirectionally degrades single-stranded DNA into large acid-insoluble oligonucleotides, which are then degraded further into small acid-soluble oligonucleotides. This Aliivibrio fischeri (strain ATCC 700601 / ES114) (Vibrio fischeri) protein is Exodeoxyribonuclease 7 large subunit.